The following is a 258-amino-acid chain: UPF0246 protein YaaA (258 aa).

This sequence belongs to the UPF0246 family.

The sequence is that of UPF0246 protein YaaA from Escherichia coli O8 (strain IAI1).